We begin with the raw amino-acid sequence, 144 residues long: 3-hydroxyacyl-[acyl-carrier-protein] dehydratase FabZ (144 aa).

Histidine 48 is an active-site residue.

The protein belongs to the thioester dehydratase family. FabZ subfamily.

The protein localises to the cytoplasm. The enzyme catalyses a (3R)-hydroxyacyl-[ACP] = a (2E)-enoyl-[ACP] + H2O. In terms of biological role, involved in unsaturated fatty acids biosynthesis. Catalyzes the dehydration of short chain beta-hydroxyacyl-ACPs and long chain saturated and unsaturated beta-hydroxyacyl-ACPs. This Listeria welshimeri serovar 6b (strain ATCC 35897 / DSM 20650 / CCUG 15529 / CIP 8149 / NCTC 11857 / SLCC 5334 / V8) protein is 3-hydroxyacyl-[acyl-carrier-protein] dehydratase FabZ.